We begin with the raw amino-acid sequence, 117 residues long: Immunoglobulin kappa variable 1-5 (117 aa).

An N-terminal signal peptide occupies residues 1–22 (MDMRVPAQLLGLLLLWLPGAKC). Positions 23-45 (DIQMTQSPSTLSASVGDRVTITC) are framework-1. The region spanning 24–117 (IQMTQSPSTL…YYCQQYNSYS (94 aa)) is the Ig-like domain. A disulfide bridge links cysteine 45 with cysteine 110. Positions 46 to 56 (RASQSISSWLA) are complementarity-determining-1. A framework-2 region spans residues 57–71 (WYQQKPGKAPKLLIY). Residues 72–78 (KASSLES) form a complementarity-determining-2 region. Positions 79–110 (GVPSRFSGSGSGTEFTLTISSLQPDDFATYYC) are framework-3. Positions 111 to 117 (QQYNSYS) are complementarity-determining-3.

As to quaternary structure, immunoglobulins are composed of two identical heavy chains and two identical light chains; disulfide-linked.

It is found in the secreted. The protein resides in the cell membrane. In terms of biological role, v region of the variable domain of immunoglobulin light chains that participates in the antigen recognition. Immunoglobulins, also known as antibodies, are membrane-bound or secreted glycoproteins produced by B lymphocytes. In the recognition phase of humoral immunity, the membrane-bound immunoglobulins serve as receptors which, upon binding of a specific antigen, trigger the clonal expansion and differentiation of B lymphocytes into immunoglobulins-secreting plasma cells. Secreted immunoglobulins mediate the effector phase of humoral immunity, which results in the elimination of bound antigens. The antigen binding site is formed by the variable domain of one heavy chain, together with that of its associated light chain. Thus, each immunoglobulin has two antigen binding sites with remarkable affinity for a particular antigen. The variable domains are assembled by a process called V-(D)-J rearrangement and can then be subjected to somatic hypermutations which, after exposure to antigen and selection, allow affinity maturation for a particular antigen. This chain is Immunoglobulin kappa variable 1-5, found in Homo sapiens (Human).